We begin with the raw amino-acid sequence, 430 residues long: Probable sulfoacetate transporter SauU (430 aa).

The next 10 helical transmembrane spans lie at Leu47–Trp67, Leu83–Val103, Phe142–Gly162, Glu165–Phe185, Trp228–Leu248, Leu263–Val283, Ala301–Ala321, Val327–Leu347, Met362–Ile382, and Leu390–Asn410.

Belongs to the major facilitator superfamily.

Its subcellular location is the cell membrane. Functionally, may transport sulfoacetate into the cell. This is Probable sulfoacetate transporter SauU (sauU) from Cupriavidus necator (strain ATCC 17699 / DSM 428 / KCTC 22496 / NCIMB 10442 / H16 / Stanier 337) (Ralstonia eutropha).